Consider the following 58-residue polypeptide: UPF0434 protein Daro_3207 (58 aa).

The protein belongs to the UPF0434 family.

This Dechloromonas aromatica (strain RCB) protein is UPF0434 protein Daro_3207.